The following is a 147-amino-acid chain: Large ribosomal subunit protein bL9 (147 aa).

The protein belongs to the bacterial ribosomal protein bL9 family.

Binds to the 23S rRNA. The protein is Large ribosomal subunit protein bL9 of Nitratiruptor sp. (strain SB155-2).